Reading from the N-terminus, the 200-residue chain is Probable nicotinate-nucleotide adenylyltransferase (200 aa).

This sequence belongs to the NadD family.

It carries out the reaction nicotinate beta-D-ribonucleotide + ATP + H(+) = deamido-NAD(+) + diphosphate. It participates in cofactor biosynthesis; NAD(+) biosynthesis; deamido-NAD(+) from nicotinate D-ribonucleotide: step 1/1. Catalyzes the reversible adenylation of nicotinate mononucleotide (NaMN) to nicotinic acid adenine dinucleotide (NaAD). The chain is Probable nicotinate-nucleotide adenylyltransferase from Lachnoclostridium phytofermentans (strain ATCC 700394 / DSM 18823 / ISDg) (Clostridium phytofermentans).